We begin with the raw amino-acid sequence, 55 residues long: DNA-binding protein (55 aa).

Residues 1–55 (MVYRRRRRSSTGTTYGSTRRRRSSGYRRRPGRPRTYRRSRSRSSTGRRSYRTRYY) are disordered. 2 tandem repeats follow at residues 5–10 (RRRRSS) and 19–24 (RRRRSS). The tract at residues 5-24 (RRRRSSTGTTYGSTRRRRSS) is 2 X 6 AA repeats of R-R-R-R-S-S. Basic residues predominate over residues 18 to 41 (TRRRRSSGYRRRPGRPRTYRRSRS).

As to quaternary structure, interacts with protein AC132. In terms of processing, phosphorylated.

It localises to the virion. The protein resides in the host cytoplasm. Plays a role in viral DNA packaging and nucleocapsid assembly. Promotes viral gene transcription during the late stage of infection while it is non-essential for the basal level of viral gene transcription. This chain is DNA-binding protein (P6.9), found in Lepidoptera (butterflies and moths).